The following is a 391-amino-acid chain: Homocitrate synthase AksA (391 aa).

Positions I20–Y271 constitute a Pyruvate carboxyltransferase domain.

It belongs to the alpha-IPM synthase/homocitrate synthase family.

It carries out the reaction acetyl-CoA + 2-oxoglutarate + H2O = (2R)-homocitrate + CoA + H(+). The catalysed reaction is 2-oxoadipate + acetyl-CoA + H2O = (R)-dihomocitrate + CoA + H(+). It catalyses the reaction 2-oxoheptanedioate + acetyl-CoA + H2O = (R)-trihomocitrate + CoA + H(+). It functions in the pathway organic acid metabolism; 2-oxosuberate biosynthesis. Its function is as follows. Catalyzes the condensation of alpha-ketoglutarate and acetyl-CoA to form (R)-homocitrate. Can also catalyze the condensation of alpha-ketoadipate with acetyl-CoA to form (R)-homo(2)citrate, and the condensation of alpha-ketopimelate with acetyl-CoA to form (R)-homo(3)citrate. These reactions are part of the biosynthesis pathway of coenzyme B and biotin. The chain is Homocitrate synthase AksA (aksA) from Methanothermobacter thermautotrophicus (strain ATCC 29096 / DSM 1053 / JCM 10044 / NBRC 100330 / Delta H) (Methanobacterium thermoautotrophicum).